The following is a 438-amino-acid chain: Serine carboxypeptidase-like 5 (438 aa).

The first 28 residues, 1–28 (MANYISSVLKSLLLLLHLVFLIQQHVDS), serve as a signal peptide directing secretion. Intrachain disulfides connect cysteine 87–cysteine 328, cysteine 251–cysteine 263, and cysteine 287–cysteine 294. N-linked (GlcNAc...) asparagine glycosylation is present at asparagine 108. The active site involves serine 183. An N-linked (GlcNAc...) asparagine glycan is attached at asparagine 347. Aspartate 363 is an active-site residue. N-linked (GlcNAc...) asparagine glycosylation occurs at asparagine 379. The active site involves histidine 416.

Belongs to the peptidase S10 family. As to expression, expressed in seedlings, roots, and siliques.

The protein resides in the secreted. Probable carboxypeptidase. The polypeptide is Serine carboxypeptidase-like 5 (SCPL5) (Arabidopsis thaliana (Mouse-ear cress)).